Reading from the N-terminus, the 331-residue chain is Aspartate carbamoyltransferase catalytic subunit (331 aa).

2 residues coordinate carbamoyl phosphate: arginine 66 and threonine 67. Lysine 94 contacts L-aspartate. Arginine 116, histidine 149, and glutamine 152 together coordinate carbamoyl phosphate. L-aspartate contacts are provided by arginine 189 and arginine 243. Glycine 284 and proline 285 together coordinate carbamoyl phosphate.

The protein belongs to the aspartate/ornithine carbamoyltransferase superfamily. ATCase family. Heterododecamer (2C3:3R2) of six catalytic PyrB chains organized as two trimers (C3), and six regulatory PyrI chains organized as three dimers (R2).

The enzyme catalyses carbamoyl phosphate + L-aspartate = N-carbamoyl-L-aspartate + phosphate + H(+). It participates in pyrimidine metabolism; UMP biosynthesis via de novo pathway; (S)-dihydroorotate from bicarbonate: step 2/3. Catalyzes the condensation of carbamoyl phosphate and aspartate to form carbamoyl aspartate and inorganic phosphate, the committed step in the de novo pyrimidine nucleotide biosynthesis pathway. This is Aspartate carbamoyltransferase catalytic subunit from Thermosynechococcus vestitus (strain NIES-2133 / IAM M-273 / BP-1).